The following is a 906-amino-acid chain: Protein translocase subunit SecA (906 aa).

Residues Q86, 104–108 (GEGKT), and D499 each bind ATP. Residues 834-847 (KLQKNMRESREDPA) are compositionally biased toward basic and acidic residues. The interval 834 to 887 (KLQKNMRESREDPAFSKYNAGSSLETDLKPVVSRVDPKDRNPDDPTSWGRVSRN) is disordered. Zn(2+) contacts are provided by C890, C892, C901, and H902.

It belongs to the SecA family. Monomer and homodimer. Part of the essential Sec protein translocation apparatus which comprises SecA, SecYEG and auxiliary proteins SecDF-YajC and YidC. The cofactor is Zn(2+).

The protein resides in the cell inner membrane. Its subcellular location is the cytoplasm. It catalyses the reaction ATP + H2O + cellular proteinSide 1 = ADP + phosphate + cellular proteinSide 2.. Part of the Sec protein translocase complex. Interacts with the SecYEG preprotein conducting channel. Has a central role in coupling the hydrolysis of ATP to the transfer of proteins into and across the cell membrane, serving both as a receptor for the preprotein-SecB complex and as an ATP-driven molecular motor driving the stepwise translocation of polypeptide chains across the membrane. The polypeptide is Protein translocase subunit SecA (Rickettsia felis (strain ATCC VR-1525 / URRWXCal2) (Rickettsia azadi)).